A 158-amino-acid polypeptide reads, in one-letter code: MSKVSYYTADGLKKLKDELEHLKSVMRPKASQDIADARDKGDLSENAEYDAAKEAQGLLEMRIAKLEEVYANARLIDESQLDVSKVLVLSNVKIKNQSNGMEMKYTLVAESEADLKTGKISVTSPIGKGLLGKSVGEIAEITVPNGTLKFEILEITRE.

Residues 47–68 are a coiled coil; sequence AEYDAAKEAQGLLEMRIAKLEE.

Belongs to the GreA/GreB family.

In terms of biological role, necessary for efficient RNA polymerase transcription elongation past template-encoded arresting sites. The arresting sites in DNA have the property of trapping a certain fraction of elongating RNA polymerases that pass through, resulting in locked ternary complexes. Cleavage of the nascent transcript by cleavage factors such as GreA or GreB allows the resumption of elongation from the new 3'terminus. GreA releases sequences of 2 to 3 nucleotides. The polypeptide is Transcription elongation factor GreA (Flavobacterium johnsoniae (strain ATCC 17061 / DSM 2064 / JCM 8514 / BCRC 14874 / CCUG 350202 / NBRC 14942 / NCIMB 11054 / UW101) (Cytophaga johnsonae)).